Reading from the N-terminus, the 129-residue chain is NADPH-dependent 7-cyano-7-deazaguanine reductase (129 aa).

Catalysis depends on cysteine 34, which acts as the Thioimide intermediate. Aspartate 41 (proton donor) is an active-site residue. Residues 56 to 58 (VEL) and 75 to 76 (HE) each bind substrate.

Belongs to the GTP cyclohydrolase I family. QueF type 1 subfamily.

Its subcellular location is the cytoplasm. It carries out the reaction 7-aminomethyl-7-carbaguanine + 2 NADP(+) = 7-cyano-7-deazaguanine + 2 NADPH + 3 H(+). Its pathway is tRNA modification; tRNA-queuosine biosynthesis. Functionally, catalyzes the NADPH-dependent reduction of 7-cyano-7-deazaguanine (preQ0) to 7-aminomethyl-7-deazaguanine (preQ1). This Alkalilimnicola ehrlichii (strain ATCC BAA-1101 / DSM 17681 / MLHE-1) protein is NADPH-dependent 7-cyano-7-deazaguanine reductase.